The following is an 829-amino-acid chain: Protein SEY1 homolog 2 (829 aa).

A disordered region spans residues 1-21; the sequence is MDEVSPTKHFTSKPLLPTKTP. The Cytoplasmic portion of the chain corresponds to 1 to 728; sequence MDEVSPTKHF…EKENSEIKYQ (728 aa). In terms of domain architecture, GB1/RHD3-type G spans 83 to 305; the sequence is GMDYNAVGIL…FLPQYNKEIP (223 aa). Position 93–100 (93–100) interacts with GTP; that stretch reads GAQSSGKS. 2 coiled-coil regions span residues 372–396 and 576–596; these read KKIMTKEIDTAIEKYKEVTERYMES and DTIEEEIKKSKIDILNIIKEL. Residues 729 to 749 form a helical membrane-spanning segment; that stretch reads IPLYLIVLVIFFGFDEFIAIL. The Lumenal segment spans residues 750 to 752; it reads TNP. A helical transmembrane segment spans residues 753 to 773; sequence LLFILTLIIGGGIYIGYKLNL. At 774-829 the chain is on the cytoplasmic side; that stretch reads GGVAKNYIQYLLSMSLSSTMEYLRTIPFFTPLIDKIWPKDDNKDDDSTEETQEETK.

This sequence belongs to the TRAFAC class dynamin-like GTPase superfamily. GB1/RHD3 GTPase family. RHD3 subfamily.

Its subcellular location is the endoplasmic reticulum membrane. Probable GTP-binding protein that may be involved in cell development. The protein is Protein SEY1 homolog 2 of Entamoeba dispar (strain ATCC PRA-260 / SAW760).